A 155-amino-acid polypeptide reads, in one-letter code: Small ribosomal subunit protein uS7c (155 aa).

It belongs to the universal ribosomal protein uS7 family. Part of the 30S ribosomal subunit.

The protein resides in the plastid. The protein localises to the chloroplast. In terms of biological role, one of the primary rRNA binding proteins, it binds directly to 16S rRNA where it nucleates assembly of the head domain of the 30S subunit. In Marchantia polymorpha (Common liverwort), this protein is Small ribosomal subunit protein uS7c (rps7).